A 148-amino-acid polypeptide reads, in one-letter code: Putative transmembrane protein ORF23 (148 aa).

An N-terminal signal peptide occupies residues 1–18 (MVIILLGVSIVVPGLFLA). The Extracellular portion of the chain corresponds to 19-118 (TETPQTNTFE…YVGWPSGAET (100 aa)). The helical transmembrane segment at 119–139 (IITNIADIIIMATAVMIIGAI) threads the bilayer. Residues 140–148 (YTGYKVSIK) lie on the Cytoplasmic side of the membrane.

It is found in the host membrane. In His1 virus (isolate Australia/Victoria) (His1V), this protein is Putative transmembrane protein ORF23.